Here is a 313-residue protein sequence, read N- to C-terminus: uncharacterized protein (313 aa).

This is an uncharacterized protein from Acanthamoeba polyphaga mimivirus (APMV).